The primary structure comprises 448 residues: MAFDAAMSTHEDLLATIRYVRDRTGDPNAWQTGLTPTEVTAVVTSTTRSEQLDAILRKIRQRHSNLYYPAPPDREQGDAARAIADAEAALAHQNSATAQLDLQVVSAILNAHLKTVEGGESLHELQQEIEAAVRIRSDLDTPAGARDFQRFLIGKLKDIREVVATASLDAASKSALMAAWTSLYDASKGDRGDADDRGPASVGSGGAPARGAGQQPELPTRAEPDCLLDSLLLEDPGLLADDLQVPGGTSAAIPSASSTPSLPNLGGATMPGGGATPALVPGVSAPGGLPLSGLLRGVGDEPELTDFDERGQEVRDPADYEHANEPDERRADDREGADEDAGLGKSESPPQAPTTVTLPNGETVTAASPQLAAAIKAAASGTPIADAFQQQGIAIPLPGTAVANPVDSARISAGDVGVFTATPLPLALAKLFWTARFNTSQPCEGQTF.

The segment covering 187-198 (SKGDRGDADDRG) has biased composition (basic and acidic residues). 3 disordered regions span residues 187–221 (SKGDRGDADDRGPASVGSGGAPARGAGQQPELPTR), 243–270 (LQVPGGTSAAIPSASSTPSLPNLGGATM), and 291–361 (LSGL…LPNG). The segment covering 243 to 261 (LQVPGGTSAAIPSASSTPS) has biased composition (low complexity). Residues 307 to 334 (FDERGQEVRDPADYEHANEPDERRADDR) show a composition bias toward basic and acidic residues.

This sequence to M.tuberculosis Rv0025 and Rv0739.

This is an uncharacterized protein from Mycobacterium tuberculosis (strain CDC 1551 / Oshkosh).